A 309-amino-acid polypeptide reads, in one-letter code: Serine/threonine-protein phosphatase 2A catalytic subunit alpha isoform (309 aa).

Mn(2+) is bound by residues Asp57, His59, Asp85, and Asn117. Residues Asp57, His59, and Asp85 each contribute to the Zn(2+) site. Fe(3+)-binding residues include Asp85 and Asn117. His118 acts as the Proton donor in catalysis. His167 and His241 together coordinate Mn(2+). Fe(3+) contacts are provided by His167 and His241. At Tyr307 the chain carries Phosphotyrosine. At Leu309 the chain carries Leucine methyl ester.

The protein belongs to the PPP phosphatase family. PP-1 subfamily. PP2A consists of a common heterodimeric core enzyme, composed of PPP2CA, a 36 kDa catalytic subunit (subunit C), and PPP2R1A, a 65 kDa constant regulatory subunit (PR65 or subunit A), that associates with a variety of regulatory subunits. Proteins that associate with the core dimer include three families of regulatory subunits B (the R2/B/PR55/B55, R3/B''/PR72/PR130/PR59 and R5/B'/B56 families), the 48 kDa variable regulatory subunit, viral proteins, and cell signaling molecules. May indirectly interact with SGOL1, most probably through regulatory B56 subunits. Phosphatase component of the Integrator-PP2A (INTAC) complex, composed of the Integrator core complex and protein phosphatase 2A subunits PPP2CA and PPP2R1A. Requires Mn(2+) as cofactor. It depends on Fe(3+) as a cofactor. Zn(2+) serves as cofactor. In terms of processing, reversibly methyl esterified on Leu-309 by leucine carboxyl methyltransferase 1 (LCMT1) and protein phosphatase methylesterase 1 (PPME1). Carboxyl methylation influences the affinity of the catalytic subunit for the different regulatory subunits, thereby modulating the PP2A holoenzyme's substrate specificity, enzyme activity and cellular localization. Phosphorylation of either threonine (by autophosphorylation-activated protein kinase) or tyrosine results in inactivation of the phosphatase. Auto-dephosphorylation has been suggested as a mechanism for reactivation.

It localises to the cytoplasm. The protein localises to the nucleus. The protein resides in the chromosome. Its subcellular location is the centromere. It is found in the cytoskeleton. It localises to the spindle pole. It catalyses the reaction O-phospho-L-seryl-[protein] + H2O = L-seryl-[protein] + phosphate. It carries out the reaction O-phospho-L-threonyl-[protein] + H2O = L-threonyl-[protein] + phosphate. Inhibited by the interaction between PPP2R2A and ARPP19; this inhibition is enhanced when ARPP19 is phosphorylated. Inhibited by the interaction between PPP2R2A and PABIR1/FAM122A. In terms of biological role, PP2A is the major phosphatase for microtubule-associated proteins (MAPs). PP2A can modulate the activity of phosphorylase B kinase casein kinase 2, mitogen-stimulated S6 kinase, and MAP-2 kinase. Key mediator of a quality checkpoint during transcription elongation as part of the Integrator-PP2A (INTAC) complex. The INTAC complex drives premature transcription termination of transcripts that are unfavorably configured for transcriptional elongation: within the INTAC complex, PPP2CA catalyzes dephosphorylation of the C-terminal domain (CTD) of Pol II subunit POLR2A/RPB1 and SUPT5H/SPT5, thereby preventing transcriptional elongation. The sequence is that of Serine/threonine-protein phosphatase 2A catalytic subunit alpha isoform (PPP2CA) from Gallus gallus (Chicken).